The following is a 249-amino-acid chain: ATP synthase subunit a, chloroplastic (249 aa).

The next 5 helical transmembrane spans lie at 40–60 (QVLI…IVAV), 97–117 (VPFI…GALL), 136–156 (INTT…AGLS), 201–221 (LVVV…VMFL), and 222–242 (GLFT…AYIG).

It belongs to the ATPase A chain family. In terms of assembly, F-type ATPases have 2 components, CF(1) - the catalytic core - and CF(0) - the membrane proton channel. CF(1) has five subunits: alpha(3), beta(3), gamma(1), delta(1), epsilon(1). CF(0) has four main subunits: a, b, b' and c.

The protein resides in the plastid. Its subcellular location is the chloroplast thylakoid membrane. Functionally, key component of the proton channel; it plays a direct role in the translocation of protons across the membrane. The protein is ATP synthase subunit a, chloroplastic of Manihot esculenta (Cassava).